Here is an 84-residue protein sequence, read N- to C-terminus: CDC42 small effector protein 2 (84 aa).

Residues C10 and C11 are each lipidated (S-palmitoyl cysteine). One can recognise a CRIB domain in the interval 29–42 (IGEPTNFVHTAHVG). 2 positions are modified to phosphoserine: S43 and S52.

It belongs to the CDC42SE/SPEC family. Interacts with CDC42 (in GTP-bound form). Interacts weakly with RAC1 and not at all with RHOA. In terms of tissue distribution, widely expressed. Expressed at higher level in T-lymphocytes. Highly expressed in CCRF-CEM T-lymphocytes, Jurkat T-lymphocytes, and Raji B-lymphocytes compared (at protein level).

The protein resides in the cytoplasm. It is found in the cytoskeleton. It localises to the cell membrane. Its subcellular location is the cell projection. The protein localises to the phagocytic cup. Functionally, probably involved in the organization of the actin cytoskeleton by acting downstream of CDC42, inducing actin filament assembly. Alters CDC42-induced cell shape changes. In activated T-cells, may play a role in CDC42-mediated F-actin accumulation at the immunological synapse. May play a role in early contractile events in phagocytosis in macrophages. This chain is CDC42 small effector protein 2 (CDC42SE2), found in Homo sapiens (Human).